A 289-amino-acid polypeptide reads, in one-letter code: MKVTATIAAASMAIAAASADADTTSRQLILGGSIIPSGQKTYSVGIRSTAGGDTYCGGALISPTHVLTTTMCTKHAKPDFVAVGTHYVNGTKDGEQLKVIQAQNHTDFNKTGNGEYDFALLTLEKPSKFAPVKLPKADDSDIKPGMWSKAMGWGWTSFPNGSPSNEMQGVNLQVWSNEDCSQVYVINPTNVCAGGVAGKDACVADTGGPLIKENGAGDKDDVLIGLVNWGYGCGDEGAPTVYSRVSSALKWVNPIIKTKQVKTAVPVQQAISGKHGVPIKQGMPGTVRN.

A signal peptide spans 1–19; the sequence is MKVTATIAAASMAIAAASA. Positions 29–257 constitute a Peptidase S1 domain; the sequence is ILGGSIIPSG…ALKWVNPIIK (229 aa). An intrachain disulfide couples Cys56 to Cys72. 3 N-linked (GlcNAc...) asparagine glycosylation sites follow: Asn89, Asn104, and Asn109. 2 disulfide bridges follow: Cys180–Cys192 and Cys202–Cys233.

Belongs to the peptidase S1 family.

The protein localises to the secreted. Its function is as follows. Secreted effector that suppresses host plant glucan elicitor-mediated defense responses. Targets host endoglucanases and inhibits the endoglucanase-mediated release of elicitor-active glucan oligosaccharides from P.sojae cell walls. The sequence is that of Glucanase inhibitor protein 2 from Phytophthora sojae (Soybean stem and root rot agent).